The primary structure comprises 63 residues: uncharacterized protein (63 aa).

Residues 37–57 (IFFPTTFDVLLLAILIFLACA) traverse the membrane as a helical segment.

It localises to the cell membrane. This is an uncharacterized protein from Bacillus subtilis (strain 168).